Reading from the N-terminus, the 252-residue chain is Phosphoglycolate phosphatase (252 aa).

Residue Asp-13 is the Nucleophile of the active site. Residues Asp-13, Asp-15, and Asp-192 each coordinate Mg(2+).

It belongs to the HAD-like hydrolase superfamily. CbbY/CbbZ/Gph/YieH family. In terms of assembly, monomer. Requires Mg(2+) as cofactor. Chloride is required as a cofactor.

It catalyses the reaction 2-phosphoglycolate + H2O = glycolate + phosphate. It participates in organic acid metabolism; glycolate biosynthesis; glycolate from 2-phosphoglycolate: step 1/1. Its function is as follows. Specifically catalyzes the dephosphorylation of 2-phosphoglycolate. Is involved in the dissimilation of the intracellular 2-phosphoglycolate formed during the DNA repair of 3'-phosphoglycolate ends, a major class of DNA lesions induced by oxidative stress. The protein is Phosphoglycolate phosphatase of Escherichia coli O157:H7.